The primary structure comprises 406 residues: MTLNPTVLVINCGSSSIKFSVLTADNCEAVISGIADGIGTEKPFLRIDRVTQFQLAKWNYSDALAAIADELDKRGLSKSISLIGHRIAHGGEIFSESVLIDDRVVEEIKKVSPLAPLHNYANLHGVGAARQLFPGIKQVAVFDTGFHQTLKPEAYLYALPYRYFREQGVRRYGFHGTSYRYVVGEAASFLGFDGSDCGLIIAHLGNGASLCAVQDGKSVDTSMGMTPLEGLIMGTRSGDVDYGALAYLARQTGQSLEDLDHMVNKESGLLGISGLSADMRVLENAYHEGHEGARLAINTFVHRLARHIGGHASSLRRFDALIFTGGIGENSSLIRQLTLEHLAVFGIDIDHAKNKRLQHGTSQIITTARSRVTAAVIPTNEEKMIALDAIRLGYAQQGTVVLEAVI.

ATP contacts are provided by Asn-11 and Lys-18. Asn-11 serves as a coordination point for Mg(2+). Arg-86 contributes to the substrate binding site. Asp-143 serves as the catalytic Proton donor/acceptor. Residues His-175, 203–207, 278–280, and 326–330 contribute to the ATP site; these read HLGNG, DMR, and GIGEN.

The protein belongs to the acetokinase family. TdcD subfamily. Homodimer. The cofactor is Mg(2+).

The catalysed reaction is propanoate + ATP = propanoyl phosphate + ADP. The protein operates within amino-acid degradation; L-threonine degradation via propanoate pathway; propanoate from L-threonine: step 4/4. Catalyzes the conversion of propionyl phosphate and ADP to propionate and ATP. The polypeptide is Propionate kinase (Yersinia enterocolitica serotype O:8 / biotype 1B (strain NCTC 13174 / 8081)).